The following is a 272-amino-acid chain: uncharacterized protein (272 aa).

Positions 1 to 22 are cleaved as a signal peptide; sequence MEYIKKIALYMSVLLLIIFIGG. A lipid anchor (N-palmitoyl cysteine) is attached at Cys23. The S-diacylglycerol cysteine moiety is linked to residue Cys23.

Belongs to the staphylococcal tandem lipoprotein family.

It is found in the cell membrane. This is an uncharacterized protein from Staphylococcus aureus (strain MRSA252).